A 395-amino-acid polypeptide reads, in one-letter code: Argininosuccinate synthase (395 aa).

7–15 (LYSGGLDTS) serves as a coordination point for ATP. Tyrosine 83 is an L-citrulline binding site. Residue glycine 113 coordinates ATP. Positions 115, 119, and 120 each coordinate L-aspartate. Asparagine 119 is an L-citrulline binding site. L-citrulline contacts are provided by arginine 123, serine 169, serine 178, glutamate 253, and tyrosine 265.

It belongs to the argininosuccinate synthase family. Type 1 subfamily. As to quaternary structure, homotetramer.

It is found in the cytoplasm. It carries out the reaction L-citrulline + L-aspartate + ATP = 2-(N(omega)-L-arginino)succinate + AMP + diphosphate + H(+). It participates in amino-acid biosynthesis; L-arginine biosynthesis; L-arginine from L-ornithine and carbamoyl phosphate: step 2/3. The polypeptide is Argininosuccinate synthase (Picrophilus torridus (strain ATCC 700027 / DSM 9790 / JCM 10055 / NBRC 100828 / KAW 2/3)).